Reading from the N-terminus, the 238-residue chain is Sugar fermentation stimulation protein homolog (238 aa).

It belongs to the SfsA family.

This chain is Sugar fermentation stimulation protein homolog, found in Klebsiella pneumoniae (strain 342).